We begin with the raw amino-acid sequence, 30 residues long: APRSMRRSSDCFGSRIDRIGAQSGMGCGRF.

The propeptide occupies 1-3 (APR). Cys11 and Cys27 are joined by a disulfide.

The protein belongs to the natriuretic peptide family. Post-translationally, cleaved upon secretion to produce the functional hormone.

Its subcellular location is the secreted. In terms of biological role, hormone playing a key role in cardiovascular homeostasis through regulation of natriuresis, diuresis, and vasodilation. Has a cGMP-stimulating activity. This Pelophylax ridibundus (Marsh frog) protein is Natriuretic peptides A.